We begin with the raw amino-acid sequence, 514 residues long: 2,3-bisphosphoglycerate-independent phosphoglycerate mutase (514 aa).

Asp-14 and Ser-64 together coordinate Mn(2+). Ser-64 serves as the catalytic Phosphoserine intermediate. Substrate contacts are provided by residues His-125, 155-156 (RD), Arg-187, Arg-193, 263-266 (RADR), and Lys-337. Asp-404, His-408, Asp-445, His-446, and His-464 together coordinate Mn(2+).

Belongs to the BPG-independent phosphoglycerate mutase family. In terms of assembly, monomer. Mn(2+) serves as cofactor.

The catalysed reaction is (2R)-2-phosphoglycerate = (2R)-3-phosphoglycerate. It participates in carbohydrate degradation; glycolysis; pyruvate from D-glyceraldehyde 3-phosphate: step 3/5. Its function is as follows. Catalyzes the interconversion of 2-phosphoglycerate and 3-phosphoglycerate. The protein is 2,3-bisphosphoglycerate-independent phosphoglycerate mutase of Pseudoalteromonas translucida (strain TAC 125).